Reading from the N-terminus, the 71-residue chain is MKANIHPDYTDLKVTCSCGNAFTTKSTMSKDAFHIEVCSECHPFYTGKQKVVDTAGRIDKFKQKFGKFSRG.

Residues Cys16, Cys18, Cys38, and Cys41 each contribute to the Zn(2+) site.

The protein belongs to the bacterial ribosomal protein bL31 family. Type A subfamily. As to quaternary structure, part of the 50S ribosomal subunit. Zn(2+) is required as a cofactor.

Functionally, binds the 23S rRNA. In Laribacter hongkongensis (strain HLHK9), this protein is Large ribosomal subunit protein bL31.